Reading from the N-terminus, the 303-residue chain is Enoyl-CoA hydratase domain-containing protein 3, mitochondrial (303 aa).

A mitochondrion-targeting transit peptide spans 1–17 (MAAVAVLRAFGASGPMC). Lys110 is subject to N6-succinyllysine.

The protein belongs to the enoyl-CoA hydratase/isomerase family. As to expression, expressed in adipocytes. Expressed in blood cells, with higher expression in patients with low coronary lesions.

It is found in the mitochondrion. In terms of biological role, may play a role in fatty acid biosynthesis and insulin sensitivity. In Homo sapiens (Human), this protein is Enoyl-CoA hydratase domain-containing protein 3, mitochondrial.